The chain runs to 341 residues: Ketol-acid reductoisomerase (NADP(+)) (341 aa).

The 182-residue stretch at 1-182 folds into the KARI N-terminal Rossmann domain; that stretch reads MTEMFYDDDA…GGTRAGVIKT (182 aa). NADP(+) is bound by residues 25-28, Lys48, Ser51, Ser53, and 83-86; these read YGSQ and DQHQ. His108 is a catalytic residue. Gly134 lines the NADP(+) pocket. Residues 183–328 form the KARI C-terminal knotted domain; the sequence is TFTEETETDL…RELRSLFSWQ (146 aa). Positions 191, 195, 227, and 231 each coordinate Mg(2+). Ser252 is a binding site for substrate.

This sequence belongs to the ketol-acid reductoisomerase family. Requires Mg(2+) as cofactor.

The enzyme catalyses (2R)-2,3-dihydroxy-3-methylbutanoate + NADP(+) = (2S)-2-acetolactate + NADPH + H(+). It catalyses the reaction (2R,3R)-2,3-dihydroxy-3-methylpentanoate + NADP(+) = (S)-2-ethyl-2-hydroxy-3-oxobutanoate + NADPH + H(+). The protein operates within amino-acid biosynthesis; L-isoleucine biosynthesis; L-isoleucine from 2-oxobutanoate: step 2/4. It functions in the pathway amino-acid biosynthesis; L-valine biosynthesis; L-valine from pyruvate: step 2/4. Functionally, involved in the biosynthesis of branched-chain amino acids (BCAA). Catalyzes an alkyl-migration followed by a ketol-acid reduction of (S)-2-acetolactate (S2AL) to yield (R)-2,3-dihydroxy-isovalerate. In the isomerase reaction, S2AL is rearranged via a Mg-dependent methyl migration to produce 3-hydroxy-3-methyl-2-ketobutyrate (HMKB). In the reductase reaction, this 2-ketoacid undergoes a metal-dependent reduction by NADPH to yield (R)-2,3-dihydroxy-isovalerate. This is Ketol-acid reductoisomerase (NADP(+)) from Pseudarthrobacter chlorophenolicus (strain ATCC 700700 / DSM 12829 / CIP 107037 / JCM 12360 / KCTC 9906 / NCIMB 13794 / A6) (Arthrobacter chlorophenolicus).